The primary structure comprises 122 residues: Large ribosomal subunit protein uL14 (122 aa).

This sequence belongs to the universal ribosomal protein uL14 family. In terms of assembly, part of the 50S ribosomal subunit. Forms a cluster with proteins L3 and L19. In the 70S ribosome, L14 and L19 interact and together make contacts with the 16S rRNA in bridges B5 and B8.

Its function is as follows. Binds to 23S rRNA. Forms part of two intersubunit bridges in the 70S ribosome. The polypeptide is Large ribosomal subunit protein uL14 (Mycolicibacterium vanbaalenii (strain DSM 7251 / JCM 13017 / BCRC 16820 / KCTC 9966 / NRRL B-24157 / PYR-1) (Mycobacterium vanbaalenii)).